The following is a 1432-amino-acid chain: ABC transporter asL7 (1432 aa).

Residues 1-20 (MFDTTKLQSSTQDGSTSSVT) show a composition bias toward polar residues. The segment at 1–36 (MFDTTKLQSSTQDGSTSSVTGEPIFGANDPNSELNP) is disordered. Residues 91 to 341 (LALPGMLIRN…FERLGFECPS (251 aa)) enclose the ABC transporter 1 domain. Asn-265 carries N-linked (GlcNAc...) asparagine glycosylation. Transmembrane regions (helical) follow at residues 450–470 (PTIVVTMGNFVLALIMSSLFF), 484–504 (VVLFMAVMFNAFASVLEVMTL), 530–550 (VLMDLPIKVLACVSFNLVFYF), 559–579 (GNFFFYLLASFFIVLSMSGIF), 597–617 (MIPASILMVFLITFAGFMVPI), and 702–722 (IGIVIAMTIFNYTMCFITSEY). In terms of domain architecture, ABC transporter 2 spans 786–1029 (FHWRNVCYDI…TLVEYFERKA (244 aa)). An ATP-binding site is contributed by 822–829 (GVSGAGKT). Residue Asn-1017 is glycosylated (N-linked (GlcNAc...) asparagine). The segment at 1076 to 1095 (LSRLREHGSQSNSHDSEKSE) is disordered. 6 helical membrane-spanning segments follow: residues 1135–1155 (FALCGVVSLFIGLVFLNSPLS), 1166–1186 (VFQLFAIVGQLVSQQMPQFII), 1215–1235 (IPYYALASVMMWALWYFPIGL), 1251–1271 (LMWLLFLAWLMWVSTFGHFCI), 1279–1299 (AGANAANFMYVLVNFFCGALI), and 1317–1337 (LSYLVSSMLSAGIANVEVTCA). An N-linked (GlcNAc...) asparagine glycan is attached at Asn-1371. Residues 1402–1422 (FGIIWVYVIFNISAAITLYWV) form a helical membrane-spanning segment.

The protein belongs to the ABC transporter superfamily. ABCG family. PDR (TC 3.A.1.205) subfamily.

It is found in the cell membrane. Functionally, ABC transporter; part of the gene cluster that mediates the biosynthesis of xenovulene A, an unusual meroterpenoid that has potent inhibitory effects on the human gamma-aminobutyrate A (GABAA) benzodiazepine receptor. The polypeptide is ABC transporter asL7 (Sarocladium schorii (Acremonium strictum (strain IMI 501407))).